Consider the following 317-residue polypeptide: Transcription factor MYB35 (317 aa).

HTH myb-type domains follow at residues 9–65 (KSNV…RPDL) and 66–116 (KHDS…KKKL). 2 DNA-binding regions (H-T-H motif) span residues 37-61 (WSLI…TNYL) and 89-112 (WSSI…NTKL).

In terms of tissue distribution, inflorescences-specific. Accumulates in anthers, especially in tapetum and meiocytes/microsporocytes and microspores during anther development.

The protein localises to the nucleus. Required for anther development and early tapetal function during microspore maturation. Regulates callose dissolution required for microspores release from the tetrads. This is Transcription factor MYB35 from Arabidopsis thaliana (Mouse-ear cress).